The primary structure comprises 283 residues: K88 fimbrial protein AC (283 aa).

Residues 1–21 form the signal peptide; that stretch reads MKKTLIALAIAASAASGMAHA.

The protein belongs to the fimbrial K88 protein family. In terms of assembly, K88 fimbria, 0.1-1 micrometer in length and 7 nanometers in diameter, is composed of about 100 identical subunits.

It localises to the fimbrium. Its function is as follows. K88 major fimbrial subunit. Fimbriae (also called pili), are polar filaments radiating from the surface of the bacterium to a length of 0.5-1.5 micrometers and numbering 100-300 per cell. They enable bacteria to colonize the epithelium of specific host organs. This Escherichia coli protein is K88 fimbrial protein AC (faeG).